A 147-amino-acid chain; its full sequence is Antiholin-like protein LrgA (147 aa).

The next 4 membrane-spanning stretches (helical) occupy residues 12–32, 35–55, 74–94, and 98–118; these read PAHF…SKII, FMPI…VLLC, NIGL…GVIS, and FLII…TGYV.

Belongs to the CidA/LrgA family. LrgA subfamily.

Its subcellular location is the cell membrane. Inhibits the expression or activity of extracellular murein hydrolases by interacting, possibly with LrgB, with the holin-like proteins CidA and/or CidB. The LrgAB and CidAB proteins may affect the proton motive force of the membrane. May be involved in programmed cell death (PCD), possibly triggering PCD in response to antibiotics and environmental stresses. The sequence is that of Antiholin-like protein LrgA from Staphylococcus aureus (strain USA300).